A 245-amino-acid chain; its full sequence is 14-3-3 protein theta (245 aa).

Methionine 1 bears the N-acetylmethionine mark. N6-acetyllysine is present on lysine 3. Lysine 49 is subject to N6-acetyllysine; alternate. Lysine 49 participates in a covalent cross-link: Glycyl lysine isopeptide (Lys-Gly) (interchain with G-Cter in SUMO2); alternate. The residue at position 68 (lysine 68) is an N6-acetyllysine. A 3'-nitrotyrosine modification is found at tyrosine 82. The residue at position 92 (serine 92) is a Phosphoserine. At tyrosine 104 the chain carries 3'-nitrotyrosine. Position 115 is an N6-acetyllysine (lysine 115). Residue serine 232 is modified to Phosphoserine; by CK1.

Belongs to the 14-3-3 family. As to quaternary structure, homodimer. Interacts with CDKN1B ('Thr-198' phosphorylated form); the interaction translocates CDKN1B to the cytoplasm. Interacts with SSH1. Interacts with GAB2. Interacts with RGS7 (phosphorylated form). Interacts with CDK16. Interacts with the 'Ser-241' phosphorylated form of PDPK1. Interacts with the 'Thr-369' phosphorylated form of DAPK2. Interacts with PI4KB, TBC1D22A and TBC1D22B. Interacts with SLITRK1. Interacts with RIPOR2. Interacts with INAVA; the interaction increases upon PRR (pattern recognition receptor) stimulation and is required for cellular signaling pathway activation and cytokine secretion. Interacts with MARK2, MARK3 and MARK4. Interacts with MEFV.

It localises to the cytoplasm. In terms of biological role, adapter protein implicated in the regulation of a large spectrum of both general and specialized signaling pathways. Binds to a large number of partners, usually by recognition of a phosphoserine or phosphothreonine motif. Binding generally results in the modulation of the activity of the binding partner. Negatively regulates the kinase activity of PDPK1. In Mus musculus (Mouse), this protein is 14-3-3 protein theta (Ywhaq).